We begin with the raw amino-acid sequence, 359 residues long: MMP endo-(1,4)-3-O-methyl-alpha-D-mannosidase (359 aa).

As to quaternary structure, monomer in solution.

It catalyses the reaction Endohydrolysis of 3-O-methyl-alpha-D-mannosyl-(1-&gt;4)-3-O-methyl-D-mannose linkages within (1,4)-3-O-methyl-alpha-D-mannnan substrates.. In terms of biological role, hydrolase involved in the biosynthesis of 3-O-methylmannose polysaccharides (MMP), which are intracellular polymethylated polysaccharides implicated in the modulation of fatty acid metabolism in non-tuberculous mycobacteria. Highly specific hydrolase that catalyzes the internal cleavage of MMP. Is able to hydrolyze purified MMP into distinct lower order oligomannosides but does not cleave acylated or deacylated forms of 6-O-methylglucose lipopolysaccharide (MGLP), beta-mannans, synthetic 4alpha-oligomannosides or its own reaction products. Products were identified as four distinct oligomannosides differing in the number of mannose units (4 to 8) and methylation pattern (free or methylated C1-OH). Might serve as a recycling enzyme that hydrolyzes mature MMP into defined-size smaller oligomannosides that are, in turn, substrates for ManT and MeT1 activities for further processing into new daughter MMP chains. The polypeptide is MMP endo-(1,4)-3-O-methyl-alpha-D-mannosidase (Mycolicibacterium hassiacum (strain DSM 44199 / CIP 105218 / JCM 12690 / 3849) (Mycobacterium hassiacum)).